The sequence spans 296 residues: NAD kinase (296 aa).

Catalysis depends on Asp-72, which acts as the Proton acceptor. NAD(+) contacts are provided by residues Asp-72–Gly-73, Asn-146–Asp-147, Arg-157, Lys-174, Asp-176, Thr-187–Ser-192, and Gln-247.

Belongs to the NAD kinase family. A divalent metal cation is required as a cofactor.

The protein localises to the cytoplasm. The enzyme catalyses NAD(+) + ATP = ADP + NADP(+) + H(+). Its function is as follows. Involved in the regulation of the intracellular balance of NAD and NADP, and is a key enzyme in the biosynthesis of NADP. Catalyzes specifically the phosphorylation on 2'-hydroxyl of the adenosine moiety of NAD to yield NADP. This Pseudomonas syringae pv. syringae (strain B728a) protein is NAD kinase.